A 623-amino-acid polypeptide reads, in one-letter code: Chaperone protein DnaK (623 aa).

Residues 582–603 show a composition bias toward low complexity; the sequence is QQQQAAEQAAQQQSGGQQASGS. The disordered stretch occupies residues 582 to 623; sequence QQQQAAEQAAQQQSGGQQASGSNPGKDPNVVDADYEVVNDKK. Over residues 614-623 the composition is skewed to acidic residues; that stretch reads ADYEVVNDKK.

This sequence belongs to the heat shock protein 70 family.

Functionally, acts as a chaperone. The polypeptide is Chaperone protein DnaK (Methanocella arvoryzae (strain DSM 22066 / NBRC 105507 / MRE50)).